We begin with the raw amino-acid sequence, 570 residues long: Repressible high-affinity phosphate permease (570 aa).

The Cytoplasmic portion of the chain corresponds to 1-61 (MSTPQKTAGG…AVAGVGFFTD (61 aa)). A helical transmembrane segment spans residues 62–82 (SYDIFTVSLLTLMLGIVYFPG). The Extracellular segment spans residues 83–95 (EGKMPTTSDTAIK). Residues 96–116 (LATSAGTVIGQVGFGAAADVF) traverse the membrane as a helical segment. Over 117 to 120 (GRKS) the chain is Cytoplasmic. A helical transmembrane segment spans residues 121 to 141 (MYGLELLFIIFATLAQALASG). Residues 142-143 (SP) lie on the Extracellular side of the membrane. The helical transmembrane segment at 144 to 164 (SINIIGIIIFWRVLMGVGIGG) threads the bilayer. Residues 165–186 (DYPLSSIITSEFATTKWRGAMM) lie on the Cytoplasmic side of the membrane. Residues 187–207 (GAVFAMQGLGQLAAAFVMLFV) traverse the membrane as a helical segment. Residues 208–237 (TLGFKKSLEAAPTLASCTGDCAVAVDKMWR) are Extracellular-facing. Residues 238-258 (TVIGVGAVPGCIALYYRLTIP) form a helical membrane-spanning segment. At 259 to 325 (ETPRYTFDVK…FFRHYSKRKN (67 aa)) the chain is on the cytoplasmic side. The helical transmembrane segment at 326–346 (AMLLAGTALSWCFLDIAYYGV) threads the bilayer. At 347 to 374 (SLNNATILNVIGYSTTGAKNTYEILYNT) the chain is on the extracellular side. The helical transmembrane segment at 375–395 (AVGNLIIVLAGAVPGYWVTVF) threads the bilayer. At 396–403 (TVDTVGRK) the chain is on the cytoplasmic side. Residues 404–424 (PIQFMGFGILTILFVVMGFAY) form a helical membrane-spanning segment. The Extracellular portion of the chain corresponds to 425–433 (KHLSPHALL). The chain crosses the membrane as a helical span at residues 434-454 (AIFVLAQFFFNFGPNATTFIV). Residues 455-468 (PGEVFPTRYRSTSH) lie on the Cytoplasmic side of the membrane. Residues 469 to 489 (GLSAAMGKIGSIIGQGAIAPL) traverse the membrane as a helical segment. Residues 490–505 (RTRGAVKGGNPNPWMN) lie on the Extracellular side of the membrane. Residues 506-526 (HVLEIYALFMLLGVGTTFLIP) form a helical membrane-spanning segment. At 527–570 (ETKRKTLEELSGEFDMSGEEEAQRDTTLTEHKTEAPTSSAAVNA) the chain is on the cytoplasmic side. Over residues 537–546 (SGEFDMSGEE) the composition is skewed to acidic residues. The disordered stretch occupies residues 537-570 (SGEFDMSGEEEAQRDTTLTEHKTEAPTSSAAVNA). Over residues 547 to 560 (EAQRDTTLTEHKTE) the composition is skewed to basic and acidic residues. The segment covering 561–570 (APTSSAAVNA) has biased composition (polar residues).

It belongs to the major facilitator superfamily. Sugar transporter (TC 2.A.1.1) family.

The protein resides in the cell membrane. Its activity is regulated as follows. Phosphate transport activity is competitively inhibited by arsenate. Functionally, high-affinity transporter for external inorganic phosphate. Acts probably as a H(+)-phosphate symporter. The sequence is that of Repressible high-affinity phosphate permease from Neurospora crassa (strain ATCC 24698 / 74-OR23-1A / CBS 708.71 / DSM 1257 / FGSC 987).